Here is a 59-residue protein sequence, read N- to C-terminus: Antitoxin Rv0909 (59 aa).

Functionally, antitoxin component of a type II toxin-antitoxin (TA) system. Upon expression in M.smegmatis neutralizes the effect of cognate toxin Rv0910. The sequence is that of Antitoxin Rv0909 from Mycobacterium tuberculosis (strain ATCC 25618 / H37Rv).